The following is a 508-amino-acid chain: CXXC-type zinc finger protein 1 (508 aa).

The CXXC-type zinc finger occupies 10 to 47; it reads EDVWKERCMNCIRCNDEKNCGTCWPCRNGKTCDMRKCF. Disordered regions lie at residues 95 to 156 and 453 to 508; these read QQVE…EPDK and KSQS…TQNN. Composition is skewed to low complexity over residues 113–123 and 454–481; these read AAAAAQQRKAN and SQSTSSSASAHGATTPISSTSSSSSSSS.

As to quaternary structure, component of the SET2 complex (also known as the SET1/COMPASS complex), which contains at least set-2, swd-2.1, cfp-1, rbbp-5, wdr-5.1, dpy-30 and ash-2. Within the complex, interacts with wdr-5.1, ash-2 and dpy-30. Also interacts with the SIN3S complex, which contains at least sin-3, hda-1, athp-1 and mrg-1. Interacts with sin-3, hda-1 and mrg-1.

It localises to the nucleus. Transcriptional activator that exhibits a unique DNA binding specificity for CpG motifs; enriched at promoters containing the trimethylation mark on histone H3 'Lys-4' (H3K4me3). Forms part of the SET2 complex and interacts with the SIN3S HDAC complex at promoters. Required for H3K4 trimethylation and plays a repressive role in the expression of heat shock and salt-inducible genes. Required for fertility, in cooperation with class I histone deacetylases (HDACs). The polypeptide is CXXC-type zinc finger protein 1 (Caenorhabditis elegans).